Reading from the N-terminus, the 205-residue chain is SREBP regulating gene protein (205 aa).

The Cytoplasmic segment spans residues 1–16; the sequence is MVNLAAMVWRRLLRKR. A helical membrane pass occupies residues 17 to 35; the sequence is WVLALVFGLSLVYFLTSTF. Residues 36 to 205 are Lumenal-facing; the sequence is KQEERAVRDR…GESPPELFPA (170 aa). Residue N67 is glycosylated (N-linked (GlcNAc...) asparagine).

It belongs to the SPRING family. Interacts with SCAP.

Its subcellular location is the golgi apparatus membrane. Functionally, positively regulates hepatic SREBP signaling pathway by modulating the proper localization of SCAP (SREBP cleavage-activating protein) to the endoplasmic reticulum, thereby controlling the level of functional SCAP. This Bos taurus (Bovine) protein is SREBP regulating gene protein.